The following is a 233-amino-acid chain: UPF0758 protein TTE0897 (233 aa).

Residues 108-230 (SVTSPEDVIN…GISLKEKGYY (123 aa)) enclose the MPN domain. 3 residues coordinate Zn(2+): His-179, His-181, and Asp-192. A JAMM motif motif is present at residues 179–192 (HNHPSGDPTPSRED).

It belongs to the UPF0758 family.

The sequence is that of UPF0758 protein TTE0897 from Caldanaerobacter subterraneus subsp. tengcongensis (strain DSM 15242 / JCM 11007 / NBRC 100824 / MB4) (Thermoanaerobacter tengcongensis).